Consider the following 497-residue polypeptide: MQLQTVPTAIPDWSGDLLAIAVFQTEGTLTLTDPYTTLDQRLNGLLQELINEGEFQGKSGTSLLMRLLPNFPLKKLLLVGLGNREDFNLEALRRTAATIARTARRERAKTLGMALPHETLEAADAAQAIAEGVILALHSDVRFKTDPEARKLLPYPEVVTLLGLGEQTAALTRAQQICDGVILARELVNAPANEVTPVTLAETAQQLAATYGLTAKILEREDCGALGMGAFLGVAQASDLPPKFIHLTYTSPGTVHRKIALVGKGLTFDSGGLNLKTQGGIETMKMDMGGAAAVLGTAKVLGQLKPPGIEVHFIIAATENMISGRALHPGDILTASNGKTIEVNNTDAEGRLTLADALVYAEKLGVDAIVDLATLTGACIVALGDNIAGLWSNNAELAQALQKASDRCGEKFWQMPLENKYFEAMKSQVADMKNTGPRSAGSITAALFLQQFVDHTPWAHLDIAGPVWTEKEDGYNNPCGTGYPVRTLVEWLCSLSS.

Positions 264 and 269 each coordinate Mn(2+). The active site involves lysine 276. Residues aspartate 287, aspartate 347, and glutamate 349 each coordinate Mn(2+). Arginine 351 is a catalytic residue.

Belongs to the peptidase M17 family. Requires Mn(2+) as cofactor.

The protein resides in the cytoplasm. It carries out the reaction Release of an N-terminal amino acid, Xaa-|-Yaa-, in which Xaa is preferably Leu, but may be other amino acids including Pro although not Arg or Lys, and Yaa may be Pro. Amino acid amides and methyl esters are also readily hydrolyzed, but rates on arylamides are exceedingly low.. The enzyme catalyses Release of an N-terminal amino acid, preferentially leucine, but not glutamic or aspartic acids.. Presumably involved in the processing and regular turnover of intracellular proteins. Catalyzes the removal of unsubstituted N-terminal amino acids from various peptides. This chain is Probable cytosol aminopeptidase, found in Thermosynechococcus vestitus (strain NIES-2133 / IAM M-273 / BP-1).